A 302-amino-acid polypeptide reads, in one-letter code: Putative thiol protease R355 (302 aa).

Active-site residues include H182 and D199. C244 (nucleophile) is an active-site residue.

Belongs to the peptidase C48 family.

It localises to the virion. The polypeptide is Putative thiol protease R355 (Acanthamoeba polyphaga mimivirus (APMV)).